The following is a 416-amino-acid chain: Gamma-glutamyl phosphate reductase (416 aa).

The protein belongs to the gamma-glutamyl phosphate reductase family.

Its subcellular location is the cytoplasm. The catalysed reaction is L-glutamate 5-semialdehyde + phosphate + NADP(+) = L-glutamyl 5-phosphate + NADPH + H(+). It functions in the pathway amino-acid biosynthesis; L-proline biosynthesis; L-glutamate 5-semialdehyde from L-glutamate: step 2/2. Its function is as follows. Catalyzes the NADPH-dependent reduction of L-glutamate 5-phosphate into L-glutamate 5-semialdehyde and phosphate. The product spontaneously undergoes cyclization to form 1-pyrroline-5-carboxylate. The chain is Gamma-glutamyl phosphate reductase from Streptococcus pyogenes serotype M49 (strain NZ131).